Reading from the N-terminus, the 1077-residue chain is Adenylate cyclase type 4 (1077 aa).

At 1-28 the chain is on the cytoplasmic side; the sequence is MARLFSPRPPPSEDLFYETYYSLSQQYP. The next 6 membrane-spanning stretches (helical) occupy residues 29 to 50, 61 to 80, 94 to 117, 120 to 138, 141 to 162, and 170 to 190; these read LLLL…VAWA, FLTT…GLAS, GLVW…VSAW, VSYF…PLGM, AAVA…YLGP, and LLPQ…AGVY. At 191-585 the chain is on the cytoplasmic side; it reads HKALMERALR…YRLSAIPAFK (395 aa). Mg(2+)-binding residues include D278, I279, and D322. ATP contacts are provided by residues 278–283, 320–322, and R366; these read DIVGFT and LGD. S520 carries the phosphoserine modification. A Phosphothreonine modification is found at T536. Transmembrane regions (helical) follow at residues 586–607, 611–633, and 664–687; these read YYEA…LVTN, ALAI…CFSE, and IALG…FFPT. At 688 to 714 the chain is on the extracellular side; that stretch reads SSDCPFQAPNVSSMISNLSWELPGSLP. N-linked (GlcNAc...) asparagine glycosylation is found at N697 and N704. 3 helical membrane passes run 715-736, 744-764, and 791-807; these read LISV…SLFL, LLLL…SHAW, and MGAI…LVLA. At 808 to 1077 the chain is on the cytoplasmic side; sequence RQNEYYCRLD…RTGPPSATLG (270 aa). Residues K925, 1005–1007, 1012–1016, and K1052 contribute to the ATP site; these read DIW and NVASR.

This sequence belongs to the adenylyl cyclase class-4/guanylyl cyclase family. The cofactor is Mg(2+). Requires Mn(2+) as cofactor. In terms of tissue distribution, detected in the zona glomerulosa and the zona fasciculata in the adrenal gland (at protein level).

Its subcellular location is the cell membrane. It is found in the cytoplasm. The catalysed reaction is ATP = 3',5'-cyclic AMP + diphosphate. Activated by forskolin. Insensitive to calcium/calmodulin. Stimulated by GNAS and by the G-protein beta and gamma subunit complex. Functionally, catalyzes the formation of the signaling molecule cAMP in response to G-protein signaling. In Homo sapiens (Human), this protein is Adenylate cyclase type 4 (ADCY4).